The sequence spans 516 residues: Anthranilate synthase component 1 (516 aa).

L-tryptophan-binding positions include Ser56 and 283 to 285 (PYM). 324–325 (GT) contributes to the chorismate binding site. Glu351 contributes to the Mg(2+) binding site. Chorismate contacts are provided by residues Tyr439, Arg459, 473–475 (GGG), and Gly475. Glu488 is a binding site for Mg(2+).

The protein belongs to the anthranilate synthase component I family. In terms of assembly, heterotetramer consisting of two non-identical subunits: a beta subunit (TrpG) and a large alpha subunit (TrpE). Requires Mg(2+) as cofactor.

The catalysed reaction is chorismate + L-glutamine = anthranilate + pyruvate + L-glutamate + H(+). The protein operates within amino-acid biosynthesis; L-tryptophan biosynthesis; L-tryptophan from chorismate: step 1/5. Feedback inhibited by tryptophan. Its function is as follows. Part of a heterotetrameric complex that catalyzes the two-step biosynthesis of anthranilate, an intermediate in the biosynthesis of L-tryptophan. In the first step, the glutamine-binding beta subunit (TrpG) of anthranilate synthase (AS) provides the glutamine amidotransferase activity which generates ammonia as a substrate that, along with chorismate, is used in the second step, catalyzed by the large alpha subunit of AS (TrpE) to produce anthranilate. In the absence of TrpG, TrpE can synthesize anthranilate directly from chorismate and high concentrations of ammonia. The protein is Anthranilate synthase component 1 (trpE) of Mycobacterium bovis (strain ATCC BAA-935 / AF2122/97).